Consider the following 142-residue polypeptide: Small ribosomal subunit protein bS6 (142 aa).

A compositionally biased stretch (basic and acidic residues) spans 113 to 136 (IKKEPREPREPRAPREPKAEKIEE). The tract at residues 113 to 142 (IKKEPREPREPRAPREPKAEKIEEQTFSEE) is disordered.

It belongs to the bacterial ribosomal protein bS6 family.

Functionally, binds together with bS18 to 16S ribosomal RNA. In Campylobacter curvus (strain 525.92), this protein is Small ribosomal subunit protein bS6.